We begin with the raw amino-acid sequence, 190 residues long: MKNVTDSFLSLGHWPFAGSFGFFNTDILSTNLINLSVVLGVLIFFGKGVCASCLLSDLLDNRKQRILNTIRNSEELRGGAIEQLEKARTRLRKVEMEADQFRVNGYSEIEREKLNLINSIYKTLEQLENYKNETIQFEQQRTINQVRQRVFQQALQGALGTLNSCLNNELHLRTISANIGILGSIKEKTD.

The chain crosses the membrane as a helical span at residues 35 to 55 (LSVVLGVLIFFGKGVCASCLL).

Belongs to the ATPase B chain family. As to quaternary structure, F-type ATPases have 2 components, F(1) - the catalytic core - and F(0) - the membrane proton channel. F(1) has five subunits: alpha(3), beta(3), gamma(1), delta(1), epsilon(1). F(0) has four main subunits: a(1), b(1), b'(1) and c(10-14). The alpha and beta chains form an alternating ring which encloses part of the gamma chain. F(1) is attached to F(0) by a central stalk formed by the gamma and epsilon chains, while a peripheral stalk is formed by the delta, b and b' chains.

The protein localises to the plastid. Its subcellular location is the chloroplast thylakoid membrane. F(1)F(0) ATP synthase produces ATP from ADP in the presence of a proton or sodium gradient. F-type ATPases consist of two structural domains, F(1) containing the extramembraneous catalytic core and F(0) containing the membrane proton channel, linked together by a central stalk and a peripheral stalk. During catalysis, ATP synthesis in the catalytic domain of F(1) is coupled via a rotary mechanism of the central stalk subunits to proton translocation. Its function is as follows. Component of the F(0) channel, it forms part of the peripheral stalk, linking F(1) to F(0). The polypeptide is ATP synthase subunit b, chloroplastic (Coffea arabica (Arabian coffee)).